Reading from the N-terminus, the 119-residue chain is DNA-binding protein inhibitor ID-3 (119 aa).

The 53-residue stretch at 28–80 folds into the bHLH domain; that stretch reads RGKGPAAEEPLSLLDDMNHCYSRLRELVPGVPRGTQLSQVEILQRVIDYILDL.

As to quaternary structure, homodimer, and heterodimer with other HLH proteins. Interacts with COPS5 and COPS7A. Interacts with IFI204. Interacts with GATA4 and NKX2-5. Interacts with ANKRD2; both proteins cooperate in myoblast differentiation. Interacts with CLOCK and BMAL1.

It localises to the nucleus. Its function is as follows. Transcriptional regulator (lacking a basic DNA binding domain) which negatively regulates the basic helix-loop-helix (bHLH) transcription factors by forming heterodimers and inhibiting their DNA binding and transcriptional activity. Implicated in regulating a variety of cellular processes, including cellular growth, senescence, differentiation, apoptosis, angiogenesis, and neoplastic transformation. Involved in myogenesis by inhibiting skeletal muscle and cardiac myocyte differentiation and promoting muscle precursor cells proliferation. Inhibits the binding of E2A-containing protein complexes to muscle creatine kinase E-box enhancer. Regulates the circadian clock by repressing the transcriptional activator activity of the CLOCK-BMAL1 heterodimer. The polypeptide is DNA-binding protein inhibitor ID-3 (ID3) (Canis lupus familiaris (Dog)).